The primary structure comprises 101 residues: Large ribosomal subunit protein bL27 (101 aa).

A propeptide spanning residues 1–9 (MLLMNLQLF) is cleaved from the precursor.

This sequence belongs to the bacterial ribosomal protein bL27 family. The N-terminus is cleaved by ribosomal processing cysteine protease Prp.

This chain is Large ribosomal subunit protein bL27, found in Clostridium tetani (strain Massachusetts / E88).